We begin with the raw amino-acid sequence, 147 residues long: Sec-independent protein translocase protein TatB (147 aa).

The chain crosses the membrane as a helical span at residues 1–21 (MFDIGFWELVVIGVVALVVLG). The disordered stretch occupies residues 114-147 (EPVAPISVATPDEEPTVIPAARAQPSAEQGEVKP).

The protein belongs to the TatB family. In terms of assembly, the Tat system comprises two distinct complexes: a TatABC complex, containing multiple copies of TatA, TatB and TatC subunits, and a separate TatA complex, containing only TatA subunits. Substrates initially bind to the TatABC complex, which probably triggers association of the separate TatA complex to form the active translocon.

Its subcellular location is the cell inner membrane. In terms of biological role, part of the twin-arginine translocation (Tat) system that transports large folded proteins containing a characteristic twin-arginine motif in their signal peptide across membranes. Together with TatC, TatB is part of a receptor directly interacting with Tat signal peptides. TatB may form an oligomeric binding site that transiently accommodates folded Tat precursor proteins before their translocation. In Aeromonas hydrophila subsp. hydrophila (strain ATCC 7966 / DSM 30187 / BCRC 13018 / CCUG 14551 / JCM 1027 / KCTC 2358 / NCIMB 9240 / NCTC 8049), this protein is Sec-independent protein translocase protein TatB.